A 488-amino-acid polypeptide reads, in one-letter code: Fumarate hydratase, mitochondrial (488 aa).

The transit peptide at 1–24 directs the protein to the mitochondrion; that stretch reads MLRFTNCSCKTFVKSSYKLNIRRM. Residues 124 to 126, 154 to 157, 164 to 166, and T212 each bind substrate; these read SGT, HPNN, and SSN. H213 acts as the Proton donor/acceptor in catalysis. S343 is a catalytic residue. Residues S344 and 349 to 351 each bind substrate; that span reads KVN. T428 carries the phosphothreonine modification.

The protein belongs to the class-II fumarase/aspartase family. Fumarase subfamily. Homotetramer.

The protein localises to the mitochondrion matrix. The protein resides in the cytoplasm. It localises to the nucleus. The enzyme catalyses (S)-malate = fumarate + H2O. It functions in the pathway carbohydrate metabolism; tricarboxylic acid cycle; (S)-malate from fumarate: step 1/1. Catalyzes the reversible stereospecific interconversion of fumarate to L-malate. In mitochondrion, catalyzes the hydration of fumarate to L-malate in the tricarboxylic acid (TCA) cycle to facilitate a transition step in the production of energy in the form of NADH. In cytoplasm and nucleus, involved in DNA repair in response to DNA damage: following DNA double-strand breaks (DSBs), translocates from the cytosol to the nucleus and promotes DNA repair by catalyzing the dehydration of L-malate to fumarate. The protein is Fumarate hydratase, mitochondrial of Saccharomyces cerevisiae (strain ATCC 204508 / S288c) (Baker's yeast).